The sequence spans 510 residues: Xylose import ATP-binding protein XylG (510 aa).

2 consecutive ABC transporter domains span residues 5–242 and 259–505; these read LEMK…VGRE and LRVE…LRSE. 37 to 44 is a binding site for ATP; sequence GENGSGKS.

Belongs to the ABC transporter superfamily. Xylose importer (TC 3.A.1.2.4) family. The complex is composed of two ATP-binding proteins (XylG), two transmembrane proteins (XylH) and a solute-binding protein (XylF).

The protein localises to the cell inner membrane. The enzyme catalyses D-xylose(out) + ATP + H2O = D-xylose(in) + ADP + phosphate + H(+). Functionally, part of the ABC transporter complex XylFGH involved in xylose import. Responsible for energy coupling to the transport system. This is Xylose import ATP-binding protein XylG from Yersinia pestis.